A 214-amino-acid polypeptide reads, in one-letter code: Ribonuclease T (214 aa).

Residues 20-195 enclose the Exonuclease domain; it reads VVVDVETAGF…YDTQKTAELF (176 aa). The Mg(2+) site is built by aspartate 23, glutamate 25, histidine 182, and aspartate 187. Catalysis depends on histidine 182, which acts as the Proton donor/acceptor.

Belongs to the RNase T family. As to quaternary structure, homodimer. Requires Mg(2+) as cofactor.

Functionally, trims short 3' overhangs of a variety of RNA species, leaving a one or two nucleotide 3' overhang. Responsible for the end-turnover of tRNA: specifically removes the terminal AMP residue from uncharged tRNA (tRNA-C-C-A). Also appears to be involved in tRNA biosynthesis. The sequence is that of Ribonuclease T from Vibrio parahaemolyticus serotype O3:K6 (strain RIMD 2210633).